The following is a 173-amino-acid chain: Cytochrome c-type biogenesis protein CcmE (173 aa).

Residues 1–7 (MTRKSRR) are Cytoplasmic-facing. A helical; Signal-anchor for type II membrane protein membrane pass occupies residues 8–28 (LILIAACGAVLALALGLILSA). Over 29–173 (MSGSIVFFRS…DATLGQRSER (145 aa)) the chain is Periplasmic. Positions 122 and 126 each coordinate heme. Residues 134 to 173 (ALKAQGRWQEGGGKDASKAAPKDAAKPETADATLGQRSER) are disordered. The segment covering 145-162 (GGKDASKAAPKDAAKPET) has biased composition (basic and acidic residues).

It belongs to the CcmE/CycJ family.

The protein localises to the cell inner membrane. Heme chaperone required for the biogenesis of c-type cytochromes. Transiently binds heme delivered by CcmC and transfers the heme to apo-cytochromes in a process facilitated by CcmF and CcmH. This Methylorubrum extorquens (strain CM4 / NCIMB 13688) (Methylobacterium extorquens) protein is Cytochrome c-type biogenesis protein CcmE.